Here is a 329-residue protein sequence, read N- to C-terminus: Malate dehydrogenase (329 aa).

Position 12–18 (12–18) interacts with NAD(+); it reads GAAGQIG. Substrate-binding residues include arginine 93 and arginine 99. NAD(+) contacts are provided by residues asparagine 106, glutamine 113, and 130 to 132; that span reads VGN. Residues asparagine 132 and arginine 163 each contribute to the substrate site. Histidine 188 functions as the Proton acceptor in the catalytic mechanism.

It belongs to the LDH/MDH superfamily. MDH type 2 family.

The catalysed reaction is (S)-malate + NAD(+) = oxaloacetate + NADH + H(+). Strongly inhibited by Hg(2+) and Zn(2+). Activated by Na(+), NH(4)(+), Ca(2+), Cu(2+) and Mg(2+). Catalyzes the reversible oxidation of malate to oxaloacetate. Exhibits remarkably higher catalytic efficiency for oxaloacetate reduction than for malate oxidation in vitro. Highly specific for NAD(H). Can also use NADPH for oxaloacetate reduction, but catalytic efficiency is 97-fold higher with NADH. No activity detected with NADP(+) and malate. In Streptomyces avermitilis (strain ATCC 31267 / DSM 46492 / JCM 5070 / NBRC 14893 / NCIMB 12804 / NRRL 8165 / MA-4680), this protein is Malate dehydrogenase.